The chain runs to 189 residues: Xanthine phosphoribosyltransferase (189 aa).

Leu20 and Asn27 together coordinate xanthine. 128–132 (ANGQA) is a 5-phospho-alpha-D-ribose 1-diphosphate binding site. Lys156 is a xanthine binding site.

It belongs to the purine/pyrimidine phosphoribosyltransferase family. Xpt subfamily. In terms of assembly, homodimer.

It is found in the cytoplasm. It carries out the reaction XMP + diphosphate = xanthine + 5-phospho-alpha-D-ribose 1-diphosphate. It participates in purine metabolism; XMP biosynthesis via salvage pathway; XMP from xanthine: step 1/1. In terms of biological role, converts the preformed base xanthine, a product of nucleic acid breakdown, to xanthosine 5'-monophosphate (XMP), so it can be reused for RNA or DNA synthesis. This chain is Xanthine phosphoribosyltransferase, found in Leuconostoc mesenteroides subsp. mesenteroides (strain ATCC 8293 / DSM 20343 / BCRC 11652 / CCM 1803 / JCM 6124 / NCDO 523 / NBRC 100496 / NCIMB 8023 / NCTC 12954 / NRRL B-1118 / 37Y).